Consider the following 188-residue polypeptide: Elongation factor P (188 aa).

Belongs to the elongation factor P family.

The protein resides in the cytoplasm. It participates in protein biosynthesis; polypeptide chain elongation. In terms of biological role, involved in peptide bond synthesis. Stimulates efficient translation and peptide-bond synthesis on native or reconstituted 70S ribosomes in vitro. Probably functions indirectly by altering the affinity of the ribosome for aminoacyl-tRNA, thus increasing their reactivity as acceptors for peptidyl transferase. The chain is Elongation factor P from Malacoplasma penetrans (strain HF-2) (Mycoplasma penetrans).